Reading from the N-terminus, the 309-residue chain is Elongation factor Ts (309 aa).

The involved in Mg(2+) ion dislocation from EF-Tu stretch occupies residues T82 to V85.

The protein belongs to the EF-Ts family.

The protein resides in the cytoplasm. Functionally, associates with the EF-Tu.GDP complex and induces the exchange of GDP to GTP. It remains bound to the aminoacyl-tRNA.EF-Tu.GTP complex up to the GTP hydrolysis stage on the ribosome. The polypeptide is Elongation factor Ts (Rickettsia africae (strain ESF-5)).